The chain runs to 348 residues: Uroporphyrinogen decarboxylase (348 aa).

Substrate contacts are provided by residues 27-31 (RQAGR), Phe-46, Asp-76, Tyr-152, Ser-207, and His-320.

The protein belongs to the uroporphyrinogen decarboxylase family. In terms of assembly, homodimer.

Its subcellular location is the cytoplasm. The enzyme catalyses uroporphyrinogen III + 4 H(+) = coproporphyrinogen III + 4 CO2. It participates in porphyrin-containing compound metabolism; protoporphyrin-IX biosynthesis; coproporphyrinogen-III from 5-aminolevulinate: step 4/4. Catalyzes the decarboxylation of four acetate groups of uroporphyrinogen-III to yield coproporphyrinogen-III. The polypeptide is Uroporphyrinogen decarboxylase (Bacillus thuringiensis (strain Al Hakam)).